A 902-amino-acid polypeptide reads, in one-letter code: Desmocollin-2 (902 aa).

The first 27 residues, 1–27, serve as a signal peptide directing secretion; that stretch reads MAAVGSMRSGSPAFGLGHLLTLAILAL. A propeptide spanning residues 28–135 is cleaved from the precursor; it reads ASDACKEVVL…TEKVLSRAKR (108 aa). 5 Cadherin domains span residues 136-243, 244-355, 356-471, 472-579, and 580-694; these read RWAP…YPIF, TQKL…LPTF, TRTT…GPEC, IPPM…FIPK, and QTVV…RLGP. Residues 136 to 694 lie on the Extracellular side of the membrane; that stretch reads RWAPIPCSML…TGYADVRLGP (559 aa). Residue N166 is glycosylated (N-linked (GlcNAc...) asparagine). N-linked (GlcNAc...) asparagine glycosylation is found at N392, N546, and N629. The chain crosses the membrane as a helical span at residues 695-715; sequence WAILAILLGIALLFCILFTLV. Topologically, residues 716 to 902 are cytoplasmic; sequence CSVSRASKQQ…RTLAEVCAKR (187 aa). 3 positions are modified to phosphoserine: S865, S869, and S874.

Interacts with DSP, PKP2 and JUP. Interacts with DSG3; the interaction may limit the interaction of DSC3 with p38MAPK family members and therefore repress p38MAPK signaling activation. Expressed in intestinal epithelial cells (at protein level). Expressed in the heart. Expressed in tongue, bladder, stomach, liver, kidney, and lung.

It is found in the cell membrane. Its subcellular location is the cell junction. The protein resides in the desmosome. Functionally, a component of desmosome cell-cell junctions which are required for positive regulation of cellular adhesion. Promotes timely incorporation of DSG2 into desmosome intercellular junctions and promotes interaction of desmosome cell junctions with intermediate filament cytokeratin, via modulation of DSP phosphorylation. Plays an important role in desmosome-mediated maintenance of intestinal epithelial cell intercellular adhesion strength and barrier function. Positively regulates wound healing of intestinal mucosa via promotion of epithelial cell migration, and also plays a role in mechanotransduction of force between intestinal epithelial cells and extracellular matrix. May contribute to epidermal cell positioning (stratification) by mediating differential adhesiveness between cells that express different isoforms. May promote p38MAPK signaling activation that facilitates keratinocyte migration. This is Desmocollin-2 (Dsc2) from Mus musculus (Mouse).